The following is a 303-amino-acid chain: 4-diphosphocytidyl-2-C-methyl-D-erythritol kinase (303 aa).

Residue Lys24 is part of the active site. Position 111 to 121 (111 to 121 (PIASGIGGGSA)) interacts with ATP. Residue Asp153 is part of the active site.

The protein belongs to the GHMP kinase family. IspE subfamily.

The catalysed reaction is 4-CDP-2-C-methyl-D-erythritol + ATP = 4-CDP-2-C-methyl-D-erythritol 2-phosphate + ADP + H(+). It participates in isoprenoid biosynthesis; isopentenyl diphosphate biosynthesis via DXP pathway; isopentenyl diphosphate from 1-deoxy-D-xylulose 5-phosphate: step 3/6. Its function is as follows. Catalyzes the phosphorylation of the position 2 hydroxy group of 4-diphosphocytidyl-2C-methyl-D-erythritol. In Rhizobium johnstonii (strain DSM 114642 / LMG 32736 / 3841) (Rhizobium leguminosarum bv. viciae), this protein is 4-diphosphocytidyl-2-C-methyl-D-erythritol kinase.